Reading from the N-terminus, the 294-residue chain is UPF0761 membrane protein YPTS_0028 (294 aa).

7 consecutive transmembrane segments (helical) span residues 44–64, 67–87, 108–128, 136–156, 185–205, 212–232, and 246–266; these read LLSL…FPMF, ISIK…GDII, GLIV…NIIW, LVFS…LVGA, VFPL…VPTV, ALIG…GFAM, and VLAV…IVLL.

The protein belongs to the UPF0761 family.

Its subcellular location is the cell inner membrane. The sequence is that of UPF0761 membrane protein YPTS_0028 from Yersinia pseudotuberculosis serotype IB (strain PB1/+).